Reading from the N-terminus, the 100-residue chain is Small ribosomal subunit protein uS14c (100 aa).

The protein belongs to the universal ribosomal protein uS14 family. In terms of assembly, part of the 30S ribosomal subunit.

It is found in the plastid. Its subcellular location is the chloroplast. Its function is as follows. Binds 16S rRNA, required for the assembly of 30S particles. The sequence is that of Small ribosomal subunit protein uS14c from Bigelowiella natans (Pedinomonas minutissima).